Here is a 240-residue protein sequence, read N- to C-terminus: 5-oxoprolinase subunit B (240 aa).

Position 194 to 201 (glycine 194 to threonine 201) interacts with ATP.

This sequence belongs to the PxpB family. In terms of assembly, forms a complex composed of PxpA, PxpB and PxpC. Interacts with PxpC (KipA). Interaction with PxpC prevents the inhibitory action of PxpB (KipI). Interacts with KinA. Two PxpB monomers bind via their C-domains at a conserved proline in the KinA dimerization and histidine-phosphotransfer (DHp) domain.

The enzyme catalyses 5-oxo-L-proline + ATP + 2 H2O = L-glutamate + ADP + phosphate + H(+). Its function is as follows. Catalyzes the cleavage of 5-oxoproline to form L-glutamate coupled to the hydrolysis of ATP to ADP and inorganic phosphate. In addition, is a potent inhibitor of the autophosphorylation reaction of kinase A (kinA) and its reverse reaction, but does not inhibit phosphate transfer to the Spo0F response regulator once kinase A is phosphorylated. Is an inhibitor of the catalytic domain of kinase A affecting the ATP/ADP reactions and not the phosphotransferase functions of this domain. The inhibition is non-competitive with respect to ATP. The protein is 5-oxoprolinase subunit B of Bacillus subtilis (strain 168).